Reading from the N-terminus, the 287-residue chain is uncharacterized protein (287 aa).

Residues 115–287 (PQNFDREWNP…NLAIELLKAI (173 aa)) enclose the ATP-grasp domain. ATP-binding positions include lysine 145 and 178 to 188 (QKYITCSKGES). Residues aspartate 248, glutamate 261, and asparagine 263 each coordinate Mg(2+). Aspartate 248, glutamate 261, and asparagine 263 together coordinate Mn(2+).

It belongs to the RimK family.

This is an uncharacterized protein from Mycoplasma genitalium (strain ATCC 33530 / DSM 19775 / NCTC 10195 / G37) (Mycoplasmoides genitalium).